Here is a 98-residue protein sequence, read N- to C-terminus: Small ribosomal subunit protein bS6 (98 aa).

Belongs to the bacterial ribosomal protein bS6 family.

Functionally, binds together with bS18 to 16S ribosomal RNA. This is Small ribosomal subunit protein bS6 from Staphylococcus epidermidis (strain ATCC 35984 / DSM 28319 / BCRC 17069 / CCUG 31568 / BM 3577 / RP62A).